We begin with the raw amino-acid sequence, 295 residues long: MFKSGFVTIVGRPNVGKSTLLNYIMGEKLSIVSNKPQTTRNNIQTILTGEDYQIVFVDTPGIHKPKHKLGEYMVNSAKDSTNDVDLVLFLTNPDEEIGKGDKFILESLKDKKCPVYLVLNKIDESTPERVAKSLEMYSSEFNFKEIVPIAAIKGKNVDTLVDLMKTELPEGPKYYPEDMITDVPERFVVSEIVREKALRCLRDEVPHGIAVDIIQMKQSDNGTYHIEVDLICEKDSHKGIIIGKNGQMLKKIGETSRYELERFLRTKVNVKIWVKVRKEWRDNQNLLKELGYKKK.

In terms of domain architecture, Era-type G spans lysine 3–glutamate 170. The interval glycine 11–serine 18 is G1. Residue glycine 11–serine 18 coordinates GTP. The tract at residues glutamine 37 to asparagine 41 is G2. The segment at aspartate 58–glycine 61 is G3. Residues aspartate 58–isoleucine 62 and asparagine 120–aspartate 123 contribute to the GTP site. The G4 stretch occupies residues asparagine 120–aspartate 123. Residues isoleucine 149 to alanine 151 form a G5 region. In terms of domain architecture, KH type-2 spans leucine 201 to lysine 278.

The protein belongs to the TRAFAC class TrmE-Era-EngA-EngB-Septin-like GTPase superfamily. Era GTPase family. As to quaternary structure, monomer.

It is found in the cytoplasm. It localises to the cell membrane. Functionally, an essential GTPase that binds both GDP and GTP, with rapid nucleotide exchange. Plays a role in 16S rRNA processing and 30S ribosomal subunit biogenesis and possibly also in cell cycle regulation and energy metabolism. This chain is GTPase Era, found in Clostridium botulinum (strain Eklund 17B / Type B).